Consider the following 318-residue polypeptide: Ankyrin repeat and SOCS box protein 7 (318 aa).

ANK repeat units follow at residues 13–42 (QEEL…SPNG), 46–75 (NGWT…DPTV), 80–109 (GGFT…RSDI), 116–145 (DGWT…EVDP), 149–178 (KGTT…NIDI), 180–208 (NGFL…DTNL), and 213–242 (DGQT…DTNT). One can recognise an SOCS box domain in the interval 265–318 (LDFLQEVTRQPRNLQDLCRIKIRQCIGLQNLKLLDELPIAKVMKDYLKHKFDDI).

This sequence belongs to the ankyrin SOCS box (ASB) family. Interacts with CUL5. Interacts with RNF7. Interacts with PSRC1.

It participates in protein modification; protein ubiquitination. In terms of biological role, probable substrate-recognition component of a SCF-like ECS (Elongin-Cullin-SOCS-box protein) E3 ubiquitin-protein ligase complex which mediates the ubiquitination and subsequent proteasomal degradation of target proteins. Plays a role in spindle dynamics and genome integrity by targeting the mitotic progression protein PSRC1 for proteasomal degradation in a cell cycle-dependent manner. Also participates in meiosis by mediating the proper attachment between kinetochores and microtubules. This Homo sapiens (Human) protein is Ankyrin repeat and SOCS box protein 7 (ASB7).